The sequence spans 512 residues: Reduced folate transporter (512 aa).

The residue at position 1 (M1) is an N-acetylmethionine. Residues 1–29 (MVPTGQVAEKQACEEPRQDRELKSWRWLV) lie on the Cytoplasmic side of the membrane. Residues 30–50 (FYLCFFGFMAQLRPGESFITP) form a helical membrane-spanning segment. The folate site is built by I48 and T49. The Extracellular portion of the chain corresponds to 51-62 (YLLERNFTKEQV). N-linked (GlcNAc...) asparagine glycosylation occurs at N56. Residues 63 to 85 (TNEIIPMLPYSHLAVLVPIFLLT) traverse the membrane as a helical segment. Residues 86–89 (DYLR) are Cytoplasmic-facing. Residues 90–110 (YKPVLVLQCLSFVCVWLLLLL) form a helical membrane-spanning segment. Topologically, residues 111 to 114 (GTSV) are extracellular. Residues 115-137 (VHMQLMEVFYSITMAARIAYSSY) form a helical membrane-spanning segment. 2 residues coordinate folate: E121 and R131. Residues 138-151 (IFSLVQPSRYQRMA) are Cytoplasmic-facing. The helical transmembrane segment at 152–176 (SYSRAAVLLGVFISSVLGQVLVTLG) threads the bilayer. V162 provides a ligand contact to folate. At 177 to 181 (GISTY) the chain is on the extracellular side. A helical transmembrane segment spans residues 182-200 (MLNCISLGFILFSLSLSLF). Over 201–266 (LKRPKRSLFF…ELVKNVRQPQ (66 aa)) the chain is Cytoplasmic. The chain crosses the membrane as a helical span at residues 267–292 (LRLWCLWWVFNSAGYYLITYYVHVLW). Folate-binding residues include Y281, Y282, and Y286. Topologically, residues 293–300 (KITDSRLN) are extracellular. Residues 301-323 (YNGAVDAASTLLSAITAFTAGFV) traverse the membrane as a helical segment. Over 324 to 329 (NIRWAL) the chain is Cytoplasmic. Residues 330–350 (WSKLVIASVIAIQAGLVFCMF) traverse the membrane as a helical segment. The Extracellular portion of the chain corresponds to 351–353 (QIP). The chain crosses the membrane as a helical span at residues 354–377 (DIWVCYVTFVLFRGAYQFLVPIAT). The folate site is built by R366 and Q370. Over 378–391 (FQIASSLSKELCAL) the chain is Cytoplasmic. A helical membrane pass occupies residues 392-415 (VFGINTFLATALKTSITLVVSDKR). The required for substrate-binding stretch occupies residues 400 to 412 (ATALKTSITLVVS). Topologically, residues 416–423 (GLGLQVHQ) are extracellular. A helical membrane pass occupies residues 424-448 (QFRIYFMYFLTLSIICLAWAGLDGL). At 449–512 (RYYRRGRHQP…RADLRVEAKA (64 aa)) the chain is on the cytoplasmic side. S466, S471, and S476 each carry phosphoserine. The tract at residues 479 to 512 (DGDLRRPQPSAPQLLPEDGSVEDGRADLRVEAKA) is disordered. Residues 500-512 (EDGRADLRVEAKA) show a composition bias toward basic and acidic residues.

The protein belongs to the reduced folate carrier (RFC) transporter (TC 2.A.48) family. In terms of tissue distribution, expressed in liver, heart, brain, spleen, lung and skeletal muscle.

The protein resides in the cell membrane. It localises to the apical cell membrane. Its subcellular location is the basolateral cell membrane. It carries out the reaction 5-amino-1-(5-phospho-beta-D-ribosyl)imidazole-4-carboxamide(in) + (6S)-5-methyl-5,6,7,8-tetrahydrofolate(out) = 5-amino-1-(5-phospho-beta-D-ribosyl)imidazole-4-carboxamide(out) + (6S)-5-methyl-5,6,7,8-tetrahydrofolate(in). Its function is as follows. Antiporter that mediates the import of reduced folates, driven by the export of organic anions. Also acts as an importer of immunoreactive cyclic dinucleotides, but with a lower transporter activity. Mechanistically, acts as a secondary active transporter, which exports intracellular organic anions down their concentration gradients to facilitate the uptake of its substrates. Has high affinity for N5-methyltetrahydrofolate, the predominant circulating form of folate. Also mediates the import of antifolate drug methotrexate. 5-amino-4-imidazolecarboxamide riboside (AICAR), when phosphorylated to AICAR monophosphate, can serve as an organic anion for antiporter activity. The protein is Reduced folate transporter of Rattus norvegicus (Rat).